We begin with the raw amino-acid sequence, 519 residues long: MASSPAVDVSCRRREKRRQLDARRSKCRIRLGGHMEQWCLLKERLGFSLHSQLAKFLLDRYTSSGCVLCAGPEPLPPKGLQYLVLLSHAHSRECSLVPGLRGPGGQDGGLVWECSAGHTFSWGPSLSPTPSEAPKPASLPHTTRRSWCSEATSGQELADLESEHDERTQEARLPRRVGPPPETFPPPGEEEGEEEEDNDEDEEEMLSDASLWTYSSSPDDSEPDAPRLLPSPVTCTPKEGETPPAPAALSSPLAVPALSASSLSSRAPPPAEVRVQPQLSRTPQAAQQTEALASTGSQAQSAPTPAWDEDTAQIGPKRIRKAAKRELMPCDFPGCGRIFSNRQYLNHHKKYQHIHQKSFSCPEPACGKSFNFKKHLKEHMKLHSDTRDYICEFCARSFRTSSNLVIHRRIHTGEKPLQCEICGFTCRQKASLNWHQRKHAETVAALRFPCEFCGKRFEKPDSVAAHRSKSHPALLLAPQESPSGPLEPCPSISAPGPLGSSEGSRPSASPQAPTLLPQQ.

A disordered region spans residues 123-314 (GPSLSPTPSE…PAWDEDTAQI (192 aa)). Residues 145-155 (RSWCSEATSGQ) are compositionally biased toward polar residues. At Ser-162 the chain carries Phosphoserine. The segment covering 164 to 173 (HDERTQEARL) has biased composition (basic and acidic residues). Over residues 177–187 (VGPPPETFPPP) the composition is skewed to pro residues. The segment covering 188-206 (GEEEGEEEEDNDEDEEEML) has biased composition (acidic residues). A Phosphoserine modification is found at Ser-231. The segment covering 247 to 266 (AALSSPLAVPALSASSLSSR) has biased composition (low complexity). A compositionally biased stretch (polar residues) spans 277-303 (PQLSRTPQAAQQTEALASTGSQAQSAP). C2H2-type zinc fingers lie at residues 328–353 (MPCD…KYQH), 359–383 (FSCP…MKLH), 389–411 (YICE…RRIH), 417–439 (LQCE…QRKH), and 448–471 (FPCE…SKSH). Residues 469-519 (KSHPALLLAPQESPSGPLEPCPSISAPGPLGSSEGSRPSASPQAPTLLPQQ) are disordered. Phosphoserine; by AMPK is present on Ser-470. The span at 501-519 (SEGSRPSASPQAPTLLPQQ) shows a compositional bias: polar residues.

The protein belongs to the krueppel C2H2-type zinc-finger protein family. Post-translationally, phosphorylation at Ser-470 results in loss of DNA-binding activity. As to expression, ubiquitous. Highly expressed in brain, thymus and spleen.

It is found in the nucleus. May act as an transcriptional repressor for PCK1 gene expression, in turn may participate in the hepatic gluconeogenesis regulation through the activated AMPK signaling pathway. The chain is Zinc finger protein 692 (ZNF692) from Homo sapiens (Human).